The following is a 333-amino-acid chain: Phosphoenolpyruvate transferase (333 aa).

Asp65 contacts 7,8-didemethyl-8-hydroxy-5-deazariboflavin.

The protein belongs to the CofD family. As to quaternary structure, homodimer. Mg(2+) is required as a cofactor.

It carries out the reaction enolpyruvoyl-2-diphospho-5'-guanosine + 7,8-didemethyl-8-hydroxy-5-deazariboflavin = dehydro coenzyme F420-0 + GMP + H(+). It functions in the pathway cofactor biosynthesis; coenzyme F420 biosynthesis. Catalyzes the transfer of the phosphoenolpyruvate moiety from enoylpyruvoyl-2-diphospho-5'-guanosine (EPPG) to 7,8-didemethyl-8-hydroxy-5-deazariboflavin (FO) with the formation of dehydro coenzyme F420-0 and GMP. This Mycobacterium leprae (strain TN) protein is Phosphoenolpyruvate transferase.